The sequence spans 335 residues: E3 ubiquitin-protein ligase NLA (335 aa).

One can recognise an SPX domain in the interval 1-154 (MKFCKKYEEY…ESRQGQAFKT (154 aa)). The segment at 231–280 (CSICLDTVFDPISLTCGHIYCYMCACSAASVNVVDGLKTAEATEKCPLCR) adopts an RING-type zinc-finger fold.

As to quaternary structure, interacts with UBC8. Interacts with PHT1-1 and PHT1-4. Forms homodimers (via RING domain). Interacts with UBC24/PHO2. Interacts with NPF2.13/NRT1.7. Interacts with NAC92/ORE1. In terms of tissue distribution, high expression in roots and stems, medium in seedlings, flowers, rosette and cauline leaves, and very low in siliques. Detected in cotyledons, hypocotyls, pedicel, receptacle, pistil, sepal, filament of stamen and at the two ends of developing siliques.

The protein localises to the nucleus speckle. It localises to the nucleus. It is found in the cell membrane. It catalyses the reaction S-ubiquitinyl-[E2 ubiquitin-conjugating enzyme]-L-cysteine + [acceptor protein]-L-lysine = [E2 ubiquitin-conjugating enzyme]-L-cysteine + N(6)-ubiquitinyl-[acceptor protein]-L-lysine.. It participates in protein modification; protein ubiquitination. E3 ubiquitin-protein ligase that mediates E2-dependent protein ubiquitination. Plays a role in salicylic acid-mediated negative feedback regulation of salicylic acid (SA) accumulation. May be involved in the overall regulation of SA, benzoic acid and phenylpropanoid biosynthesis. Involved in defense response. May act as negative regulator of resistance to the necrotrophic fungal pathogen Plectosphaerella cucumerina by modulating the accumulation of the phytoalexin camalexin and the salicylic acid- and jasmonate- dependent defense pathways. Controls the adaptability to nitrogen limitation by channeling the phenylpropanoid metabolic flux to the induced anthocyanin synthesis. Involved in the regulation of inorganic phosphate (Pi) homeostasis in a nitrate-dependent fashion. Directs the ubiquitination and subsequent degradation of the plasma membrane-localized inorganic phosphate transporters PHT1-1 and PHT1-4, to maintain phosphate homeostasis. The ubiquitination of PHTs triggers their clathrin-dependent endocytosis and trafficking to the vacuole through the endosomal pathway for degradation. Functions cooperatively with UBC24/PHO2 to regulate the abundance of PHT1-1, PHT1-2 and PHT1-3 in different subcellular compartments. Regulates Pi homeostasis by mediating, cooperatively with UBC24/PHO2, polyubiquitination of PHT1-4 and its targeting for degradation. Directs the polyubiquitination and subsequent degradation of the plasma membrane-localized nitrate transporter NPF2.13/NRT1.7, to help plants to adapt to nitrogen deficiency by regulating the source-to-sink remobilization of nitrate. Regulates leaf senescence during nitrogen deficiency by mediating, cooperatively with UBC24/PHO2, polyubiquitination of NAC92/ORE1 and its targeting for degradation. The protein is E3 ubiquitin-protein ligase NLA of Arabidopsis thaliana (Mouse-ear cress).